Consider the following 657-residue polypeptide: UvrABC system protein B (657 aa).

The region spanning 25–182 (NSIKSNNRAQ…KKLIEIQYER (158 aa)) is the Helicase ATP-binding domain. 38–45 (GVTGSGKT) serves as a coordination point for ATP. Positions 91–114 (YYDYYQPEAYVPQTDTFIEKDASI) match the Beta-hairpin motif. A Helicase C-terminal domain is found at 429–595 (QIDDLYGEIN…TIIKDVRDII (167 aa)). A UVR domain is found at 621-656 (DKLIKDLTEEMLLAAKNLQFERAAELRDIINEIKDG).

The protein belongs to the UvrB family. As to quaternary structure, forms a heterotetramer with UvrA during the search for lesions. Interacts with UvrC in an incision complex.

It localises to the cytoplasm. Functionally, the UvrABC repair system catalyzes the recognition and processing of DNA lesions. A damage recognition complex composed of 2 UvrA and 2 UvrB subunits scans DNA for abnormalities. Upon binding of the UvrA(2)B(2) complex to a putative damaged site, the DNA wraps around one UvrB monomer. DNA wrap is dependent on ATP binding by UvrB and probably causes local melting of the DNA helix, facilitating insertion of UvrB beta-hairpin between the DNA strands. Then UvrB probes one DNA strand for the presence of a lesion. If a lesion is found the UvrA subunits dissociate and the UvrB-DNA preincision complex is formed. This complex is subsequently bound by UvrC and the second UvrB is released. If no lesion is found, the DNA wraps around the other UvrB subunit that will check the other stand for damage. The protein is UvrABC system protein B of Clostridium beijerinckii (strain ATCC 51743 / NCIMB 8052) (Clostridium acetobutylicum).